Reading from the N-terminus, the 244-residue chain is Biosynthetic peptidoglycan transglycosylase (244 aa).

The helical transmembrane segment at 26–46 (FLSYFIGLTVALTFLFRFVPI) threads the bilayer.

This sequence belongs to the glycosyltransferase 51 family.

The protein localises to the cell inner membrane. The catalysed reaction is [GlcNAc-(1-&gt;4)-Mur2Ac(oyl-L-Ala-gamma-D-Glu-L-Lys-D-Ala-D-Ala)](n)-di-trans,octa-cis-undecaprenyl diphosphate + beta-D-GlcNAc-(1-&gt;4)-Mur2Ac(oyl-L-Ala-gamma-D-Glu-L-Lys-D-Ala-D-Ala)-di-trans,octa-cis-undecaprenyl diphosphate = [GlcNAc-(1-&gt;4)-Mur2Ac(oyl-L-Ala-gamma-D-Glu-L-Lys-D-Ala-D-Ala)](n+1)-di-trans,octa-cis-undecaprenyl diphosphate + di-trans,octa-cis-undecaprenyl diphosphate + H(+). The protein operates within cell wall biogenesis; peptidoglycan biosynthesis. In terms of biological role, peptidoglycan polymerase that catalyzes glycan chain elongation from lipid-linked precursors. The protein is Biosynthetic peptidoglycan transglycosylase of Mannheimia succiniciproducens (strain KCTC 0769BP / MBEL55E).